A 189-amino-acid chain; its full sequence is Protein GrpE (189 aa).

Residues 1-20 (MSDQQHSAPQNAAATASPSD) show a composition bias toward polar residues. Residues 1 to 29 (MSDQQHSAPQNAAATASPSDSPEAVEATM) form a disordered region.

Belongs to the GrpE family. In terms of assembly, homodimer.

It localises to the cytoplasm. Participates actively in the response to hyperosmotic and heat shock by preventing the aggregation of stress-denatured proteins, in association with DnaK and GrpE. It is the nucleotide exchange factor for DnaK and may function as a thermosensor. Unfolded proteins bind initially to DnaJ; upon interaction with the DnaJ-bound protein, DnaK hydrolyzes its bound ATP, resulting in the formation of a stable complex. GrpE releases ADP from DnaK; ATP binding to DnaK triggers the release of the substrate protein, thus completing the reaction cycle. Several rounds of ATP-dependent interactions between DnaJ, DnaK and GrpE are required for fully efficient folding. In Paracidovorax citrulli (strain AAC00-1) (Acidovorax citrulli), this protein is Protein GrpE.